The chain runs to 717 residues: SUN domain-containing protein 2 (717 aa).

Residues 1–66 (MSRRSQRLTR…PQLGPSSDAH (66 aa)) are disordered. The segment at 1 to 139 (MSRRSQRLTR…SSSGYSSEDD (139 aa)) is LMNA-binding. Topologically, residues 1 to 212 (MSRRSQRLTR…LTRRFSSLKT (212 aa)) are nuclear. Serine 12 carries the phosphoserine modification. Low complexity predominate over residues 19–32 (SSSSGGSSVAGSQS). Residues serine 38 and serine 54 each carry the phosphoserine modification. The residue at position 107 (threonine 107) is a Phosphothreonine. 4 positions are modified to phosphoserine: serine 110, serine 113, serine 116, and serine 136. A helical membrane pass occupies residues 213–233 (FLWFLLPLLLLTCLTYGAWYF). Topologically, residues 234-717 (YPYGLQTFHP…RFRVHGEPAH (484 aa)) are perinuclear space. 3 coiled-coil regions span residues 273-296 (EQRV…EFSS), 348-440 (RRET…EEVG), and 475-506 (LLQR…SARE). The sufficient for interaction with SYNE1 and SYNE2 stretch occupies residues 507–717 (AAASLSLTLQ…RFRVHGEPAH (211 aa)). Positions 555-716 (GASVISTRCS…YRFRVHGEPA (162 aa)) constitute an SUN domain. A disulfide bridge links cysteine 601 with cysteine 705. A glycan (N-linked (GlcNAc...) asparagine) is linked at asparagine 636.

As to quaternary structure, core component of the LINC complex which is composed of inner nuclear membrane SUN domain-containing proteins coupled to outer nuclear membrane KASH domain-containing nesprins. SUN and KASH domain-containing proteins seem to bind each other promiscuously; however, differentially expression of LINC complex constituents is giving rise to specific assemblies. At least SUN1/2-containing core LINC complexes are proposed to be hexameric composed of three protomers of each KASH and SUN domain-containing protein. Interacts with SYNE2; the SUN2:SYNE2/KASH2 LINC complex is a heterohexamer; the homotrimeric cloverleave-like conformation of the SUN domain is a prerequisite for LINC complex formation in which three separate SYNE2/KASH2 peptides bind at the interface of adjacent SUN domains. Component of a probable SUN2:KASH5 LINC complex. Interacts with SYNE1 and SYNE3; probably forming respective LINC complexes. Interacts with A-type lamin. Interaction with lamins B1 and C is hardly detectable. Interacts with EMD and RAB5A. Interacts with TMEM43. Interacts with TMEM201. The disulfide bond with SYNE2 is required for stability of the SUN2:SYNE2/KASH2 LINC complex under tensile forces though not required for the interaction. The disulfide bond is proposed to be conserved in LINC complexes involved in force transmission. In terms of tissue distribution, widely expressed. Highly expressed in heart, lung and muscle. Weakly expressed in fetal heart. Slightly overexpressed in some heart tissues form patients with congenital heart defects.

Its subcellular location is the nucleus inner membrane. It is found in the nucleus envelope. The protein localises to the endosome membrane. Functionally, as a component of the LINC (LInker of Nucleoskeleton and Cytoskeleton) complex, involved in the connection between the nuclear lamina and the cytoskeleton. The nucleocytoplasmic interactions established by the LINC complex play an important role in the transmission of mechanical forces across the nuclear envelope and in nuclear movement and positioning. Specifically, SYNE2 and SUN2 assemble in arrays of transmembrane actin-associated nuclear (TAN) lines which are bound to F-actin cables and couple the nucleus to retrograde actin flow during actin-dependent nuclear movement. Required for interkinetic nuclear migration (INM) and essential for nucleokinesis and centrosome-nucleus coupling during radial neuronal migration in the cerebral cortex and during glial migration. Required for nuclear migration in retinal photoreceptor progenitors implicating association with cytoplasmic dynein-dynactin and kinesin motor complexes, and probably B-type lamins; SUN1 and SUN2 seem to act redundantly. The SUN1/2:KASH5 LINC complex couples telomeres to microtubules during meiosis; SUN1 and SUN2 seem to act at least partial redundantly. Anchors chromosome movement in the prophase of meiosis and is involved in selective gene expression of coding and non-coding RNAs needed for gametogenesis. Required for telomere attachment to nuclear envelope and gametogenesis. May also function on endocytic vesicles as a receptor for RAB5-GDP and participate in the activation of RAB5. This is SUN domain-containing protein 2 from Homo sapiens (Human).